The sequence spans 458 residues: Argininosuccinate lyase (458 aa).

The protein belongs to the lyase 1 family. Argininosuccinate lyase subfamily.

The protein resides in the cytoplasm. The catalysed reaction is 2-(N(omega)-L-arginino)succinate = fumarate + L-arginine. It functions in the pathway amino-acid biosynthesis; L-arginine biosynthesis; L-arginine from L-ornithine and carbamoyl phosphate: step 3/3. The polypeptide is Argininosuccinate lyase (Pseudoalteromonas atlantica (strain T6c / ATCC BAA-1087)).